Reading from the N-terminus, the 276-residue chain is Urease accessory protein UreD (276 aa).

This sequence belongs to the UreD family. As to quaternary structure, ureD, UreF and UreG form a complex that acts as a GTP-hydrolysis-dependent molecular chaperone, activating the urease apoprotein by helping to assemble the nickel containing metallocenter of UreC. The UreE protein probably delivers the nickel.

It localises to the cytoplasm. Its function is as follows. Required for maturation of urease via the functional incorporation of the urease nickel metallocenter. The sequence is that of Urease accessory protein UreD from Verminephrobacter eiseniae (strain EF01-2).